The primary structure comprises 76 residues: Small ribosomal subunit protein bS16 (76 aa).

This sequence belongs to the bacterial ribosomal protein bS16 family.

The protein is Small ribosomal subunit protein bS16 of Helicobacter pylori (strain P12).